A 287-amino-acid chain; its full sequence is ATP synthase gamma chain (287 aa).

It belongs to the ATPase gamma chain family. As to quaternary structure, F-type ATPases have 2 components, CF(1) - the catalytic core - and CF(0) - the membrane proton channel. CF(1) has five subunits: alpha(3), beta(3), gamma(1), delta(1), epsilon(1). CF(0) has three main subunits: a, b and c.

The protein localises to the cell inner membrane. Produces ATP from ADP in the presence of a proton gradient across the membrane. The gamma chain is believed to be important in regulating ATPase activity and the flow of protons through the CF(0) complex. The protein is ATP synthase gamma chain of Proteus mirabilis (strain HI4320).